The chain runs to 450 residues: Bifunctional protein GlmU (450 aa).

Positions 1–228 are pyrophosphorylase; sequence MSTALVILAA…EAQTLGVNSR (228 aa). UDP-N-acetyl-alpha-D-glucosamine is bound by residues 8 to 11, Lys22, Gln75, 80 to 81, 103 to 105, Gly140, Glu154, Asn169, and Asn226; these read LAAG, GT, and YGD. Residue Asp105 participates in Mg(2+) binding. Asn226 contacts Mg(2+). Residues 229–249 are linker; that stretch reads ADLAAADAIFQTRARAELLDL. Residues 250 to 450 form an N-acetyltransferase region; that stretch reads GVTLMAPETV…AKKASKQKET (201 aa). UDP-N-acetyl-alpha-D-glucosamine is bound by residues Arg315 and Lys333. The active-site Proton acceptor is the His345. UDP-N-acetyl-alpha-D-glucosamine is bound by residues Tyr348 and Asn359. Acetyl-CoA contacts are provided by residues Ala362, 368-369, Ser387, Thr405, and Arg422; that span reads NY.

The protein in the N-terminal section; belongs to the N-acetylglucosamine-1-phosphate uridyltransferase family. This sequence in the C-terminal section; belongs to the transferase hexapeptide repeat family. In terms of assembly, homotrimer. Mg(2+) is required as a cofactor.

Its subcellular location is the cytoplasm. It catalyses the reaction alpha-D-glucosamine 1-phosphate + acetyl-CoA = N-acetyl-alpha-D-glucosamine 1-phosphate + CoA + H(+). The enzyme catalyses N-acetyl-alpha-D-glucosamine 1-phosphate + UTP + H(+) = UDP-N-acetyl-alpha-D-glucosamine + diphosphate. Its pathway is nucleotide-sugar biosynthesis; UDP-N-acetyl-alpha-D-glucosamine biosynthesis; N-acetyl-alpha-D-glucosamine 1-phosphate from alpha-D-glucosamine 6-phosphate (route II): step 2/2. The protein operates within nucleotide-sugar biosynthesis; UDP-N-acetyl-alpha-D-glucosamine biosynthesis; UDP-N-acetyl-alpha-D-glucosamine from N-acetyl-alpha-D-glucosamine 1-phosphate: step 1/1. It participates in bacterial outer membrane biogenesis; LPS lipid A biosynthesis. Its function is as follows. Catalyzes the last two sequential reactions in the de novo biosynthetic pathway for UDP-N-acetylglucosamine (UDP-GlcNAc). The C-terminal domain catalyzes the transfer of acetyl group from acetyl coenzyme A to glucosamine-1-phosphate (GlcN-1-P) to produce N-acetylglucosamine-1-phosphate (GlcNAc-1-P), which is converted into UDP-GlcNAc by the transfer of uridine 5-monophosphate (from uridine 5-triphosphate), a reaction catalyzed by the N-terminal domain. The sequence is that of Bifunctional protein GlmU from Ruegeria pomeroyi (strain ATCC 700808 / DSM 15171 / DSS-3) (Silicibacter pomeroyi).